We begin with the raw amino-acid sequence, 314 residues long: Thymidylate synthase (314 aa).

DUMP-binding positions include R21 and 176 to 177 (RR). The active-site Nucleophile is C196. DUMP is bound by residues 216 to 219 (RSAD), N227, and 257 to 259 (HLY). A (6R)-5,10-methylene-5,6,7,8-tetrahydrofolate-binding site is contributed by D219. S313 contributes to the (6R)-5,10-methylene-5,6,7,8-tetrahydrofolate binding site.

The protein belongs to the thymidylate synthase family. Bacterial-type ThyA subfamily. As to quaternary structure, homodimer.

The protein localises to the cytoplasm. The enzyme catalyses dUMP + (6R)-5,10-methylene-5,6,7,8-tetrahydrofolate = 7,8-dihydrofolate + dTMP. It participates in pyrimidine metabolism; dTTP biosynthesis. Catalyzes the reductive methylation of 2'-deoxyuridine-5'-monophosphate (dUMP) to 2'-deoxythymidine-5'-monophosphate (dTMP) while utilizing 5,10-methylenetetrahydrofolate (mTHF) as the methyl donor and reductant in the reaction, yielding dihydrofolate (DHF) as a by-product. This enzymatic reaction provides an intracellular de novo source of dTMP, an essential precursor for DNA biosynthesis. The protein is Thymidylate synthase of Listeria monocytogenes serotype 4b (strain CLIP80459).